The primary structure comprises 475 residues: Adenosylhomocysteinase (475 aa).

The substrate site is built by T66, D141, and E201. An NAD(+)-binding site is contributed by 202 to 204; it reads TTT. The substrate site is built by K231 and D235. NAD(+) is bound by residues N236, 265 to 270, E288, N323, 344 to 346, and N389; these read GYGEVG and IGH.

This sequence belongs to the adenosylhomocysteinase family. NAD(+) serves as cofactor.

The protein resides in the cytoplasm. It catalyses the reaction S-adenosyl-L-homocysteine + H2O = L-homocysteine + adenosine. The protein operates within amino-acid biosynthesis; L-homocysteine biosynthesis; L-homocysteine from S-adenosyl-L-homocysteine: step 1/1. Functionally, may play a key role in the regulation of the intracellular concentration of adenosylhomocysteine. The sequence is that of Adenosylhomocysteinase from Geobacter sulfurreducens (strain ATCC 51573 / DSM 12127 / PCA).